We begin with the raw amino-acid sequence, 241 residues long: Proteasome subunit alpha (241 aa).

Belongs to the peptidase T1A family. In terms of assembly, the 20S proteasome core is composed of 14 alpha and 14 beta subunits that assemble into four stacked heptameric rings, resulting in a barrel-shaped structure. The two inner rings, each composed of seven catalytic beta subunits, are sandwiched by two outer rings, each composed of seven alpha subunits. The catalytic chamber with the active sites is on the inside of the barrel. Has a gated structure, the ends of the cylinder being occluded by the N-termini of the alpha-subunits. Is capped at one or both ends by the proteasome regulatory ATPase, PAN.

The protein resides in the cytoplasm. Its activity is regulated as follows. The formation of the proteasomal ATPase PAN-20S proteasome complex, via the docking of the C-termini of PAN into the intersubunit pockets in the alpha-rings, triggers opening of the gate for substrate entry. Interconversion between the open-gate and close-gate conformations leads to a dynamic regulation of the 20S proteasome proteolysis activity. Its function is as follows. Component of the proteasome core, a large protease complex with broad specificity involved in protein degradation. The chain is Proteasome subunit alpha from Methanosphaerula palustris (strain ATCC BAA-1556 / DSM 19958 / E1-9c).